The following is a 114-amino-acid chain: Endoribonuclease MazF2 (114 aa).

It belongs to the PemK/MazF family. As to quaternary structure, probably forms a complex with cognate antitoxin MazE2.

Its function is as follows. Toxic component of a type II toxin-antitoxin (TA) system. Acts as an endoribonuclease on single-strand RNA, cleaving between the second and third bases in the sequences CUCCU and UUCCU. Neutralized by coexpression with cognate antitoxin MazE2. The chain is Endoribonuclease MazF2 (mazF2) from Mycobacterium bovis (strain ATCC BAA-935 / AF2122/97).